Reading from the N-terminus, the 181-residue chain is ATP synthase subunit b, chloroplastic (181 aa).

A helical membrane pass occupies residues 28–50; it reads IINLSVVLGVLIYFGKGVLSNLL.

Belongs to the ATPase B chain family. In terms of assembly, F-type ATPases have 2 components, F(1) - the catalytic core - and F(0) - the membrane proton channel. F(1) has five subunits: alpha(3), beta(3), gamma(1), delta(1), epsilon(1). F(0) has four main subunits: a(1), b(1), b'(1) and c(10-14). The alpha and beta chains form an alternating ring which encloses part of the gamma chain. F(1) is attached to F(0) by a central stalk formed by the gamma and epsilon chains, while a peripheral stalk is formed by the delta, b and b' chains.

The protein resides in the plastid. It is found in the chloroplast thylakoid membrane. Functionally, f(1)F(0) ATP synthase produces ATP from ADP in the presence of a proton or sodium gradient. F-type ATPases consist of two structural domains, F(1) containing the extramembraneous catalytic core and F(0) containing the membrane proton channel, linked together by a central stalk and a peripheral stalk. During catalysis, ATP synthesis in the catalytic domain of F(1) is coupled via a rotary mechanism of the central stalk subunits to proton translocation. Its function is as follows. Component of the F(0) channel, it forms part of the peripheral stalk, linking F(1) to F(0). This Cryptomeria japonica (Japanese cedar) protein is ATP synthase subunit b, chloroplastic.